The sequence spans 264 residues: Protein OXIDATIVE STRESS 3 LIKE 1 (264 aa).

Disordered regions lie at residues 1 to 76 (MDCV…GPLE) and 178 to 225 (TGEG…QGSF). Positions 29–43 (PSDSSSSPSSSASSS) are enriched in low complexity. The span at 47–56 (NSDDGEKSSE) shows a compositional bias: basic and acidic residues. Over residues 57–67 (DGGDDAGENEV) the composition is skewed to acidic residues. Positions 179–201 (GEGSSSGGDSSPGSSPTTSGSPP) are enriched in low complexity. Residues 203 to 212 (QLHHHQHQMK) show a composition bias toward basic residues.

It localises to the nucleus. Promotes slightly the tolerance to zinc (Zn) and to oxidizing chemicals (e.g. diamide). This Arabidopsis thaliana (Mouse-ear cress) protein is Protein OXIDATIVE STRESS 3 LIKE 1.